A 151-amino-acid polypeptide reads, in one-letter code: Ribosomal RNA large subunit methyltransferase H (151 aa).

S-adenosyl-L-methionine-binding positions include alanine 101 and 119 to 124 (LSEMTF).

The protein belongs to the RNA methyltransferase RlmH family. Homodimer.

It is found in the cytoplasm. It catalyses the reaction pseudouridine(1915) in 23S rRNA + S-adenosyl-L-methionine = N(3)-methylpseudouridine(1915) in 23S rRNA + S-adenosyl-L-homocysteine + H(+). Functionally, specifically methylates the pseudouridine at position 1915 (m3Psi1915) in 23S rRNA. The chain is Ribosomal RNA large subunit methyltransferase H from Helicobacter pylori (strain G27).